A 518-amino-acid polypeptide reads, in one-letter code: MEEFKGYFELDRSRQHDFLYPLLFREYIYALAHDHGLNRSILFKNAGYDKKSSSIVVKRLITRMYQQNPLIFSANDSIQNPFFGHNKNLYSQIISEGFAVIVEIPFSFSLRLVSSLERKEIAKSHNLRSIHSIFPFLEDKFSHLDYVSDVLIPYHIHLEILVQTLRYWVKDASSLHLLRFFLHEYWNSLITPKKHITLFSKGNPRLFLFLYNSHICEYESTFLFLRNQSSHLRSTSSGIFFERIYFYVKIEHFAKVFFDNDFQCILWFFKDPFMHYVRYQGKSILGSKDTPLLMNKWKYYLVTLWQYHFYAWFQPGRIDINQLCKYSLDFLGYRSSVPLNSSVVRSQMLENSFLINNAMKKFETIVPIIPLIGSLSKANFCNTLGHPISKPTRADSSDSDIIDRFLRICRNLSHYHSGSSKKKSLYRVKYILRLSCVKTLARKHKRTVRTFFKRLGSEFLEEFLTEEEVVLSLIFPRTYSTSRRLYRGQIWYLDITSINDLVNYENDWLLDHGNVNYL.

This sequence belongs to the intron maturase 2 family. MatK subfamily.

It is found in the plastid. It localises to the chloroplast. In terms of biological role, usually encoded in the trnK tRNA gene intron. Probably assists in splicing its own and other chloroplast group II introns. This chain is Maturase K, found in Syzygium cumini (Java plum).